A 298-amino-acid polypeptide reads, in one-letter code: Protoheme IX farnesyltransferase (298 aa).

8 consecutive transmembrane segments (helical) span residues 23–43, 49–69, 95–115, 117–137, 144–164, 171–191, 234–254, and 276–296; these read VTQL…PGLP, LFGT…NCLI, VLSL…HLVN, LTMW…TVIL, NIVI…ASVA, AWVL…ALAL, FMHM…GIFV, and SILY…VGVL.

It belongs to the UbiA prenyltransferase family. Protoheme IX farnesyltransferase subfamily.

The protein resides in the cell inner membrane. It carries out the reaction heme b + (2E,6E)-farnesyl diphosphate + H2O = Fe(II)-heme o + diphosphate. The protein operates within porphyrin-containing compound metabolism; heme O biosynthesis; heme O from protoheme: step 1/1. In terms of biological role, converts heme B (protoheme IX) to heme O by substitution of the vinyl group on carbon 2 of heme B porphyrin ring with a hydroxyethyl farnesyl side group. The chain is Protoheme IX farnesyltransferase from Bordetella avium (strain 197N).